The chain runs to 1440 residues: Pentatricopeptide repeat-containing protein At3g18110, chloroplastic (1440 aa).

The transit peptide at methionine 1–arginine 44 directs the protein to the chloroplast. The segment covering threonine 63 to valine 72 has biased composition (polar residues). Residues threonine 63 to valine 84 are disordered. PPR repeat units follow at residues arginine 224–proline 258, aspartate 259–proline 295, aspartate 296–proline 330, aspartate 331–proline 365, aspartate 366–lysine 400, aspartate 401–leucine 431, aspartate 437–proline 471, threonine 472–proline 506, aspartate 507–proline 541, serine 542–leucine 572, glutamate 608–histidine 638, lysine 643–phenylalanine 678, serine 680–alanine 714, serine 715–phenylalanine 749, cysteine 751–proline 785, aspartate 786–proline 820, threonine 821–isoleucine 855, serine 856–proline 890, threonine 891–valine 925, glutamate 926–proline 960, aspartate 961–proline 995, lysine 996–leucine 1030, aspartate 1031–proline 1065, threonine 1066–leucine 1100, and threonine 1101–proline 1135. A disordered region spans residues lysine 1419–lysine 1440.

The protein belongs to the PPR family. P subfamily.

It localises to the plastid. It is found in the chloroplast. Its function is as follows. May play a role in embryogenesis. In Arabidopsis thaliana (Mouse-ear cress), this protein is Pentatricopeptide repeat-containing protein At3g18110, chloroplastic (EMB1270).